The primary structure comprises 397 residues: Vacuolar protein sorting-associated protein 37A (397 aa).

A disordered region spans residues 1-22 (MSWLFPLTKSASSSAAGSPGGL). A Phosphoserine modification is found at Ser-18. The 90-residue stretch at 308 to 397 (KSTFEKKMQR…AMHSQFHAPL (90 aa)) folds into the VPS37 C-terminal domain.

The protein belongs to the VPS37 family. Component of the ESCRT-I complex (endosomal sorting complex required for transport I) which consists of TSG101, VPS28, a VPS37 protein (VPS37A to -D) and MVB12A or MVB12B in a 1:1:1:1 stoichiometry. Interacts with TSG101, VPS28 and HGS. Component of an ESCRT-I complex (endosomal sorting complex required for transport I) which consists of TSG101, VPS28, VPS37A and UBAP1 in a 1:1:1:1 stoichiometry. Widely expressed. Examined tissues include heart, brain, placenta, liver, skeletal muscle, kidney and pancreas. More abundant in liver. Strongly decreased or undetected in hepatomas.

It localises to the late endosome membrane. Its subcellular location is the nucleus. Component of the ESCRT-I complex, a regulator of vesicular trafficking process. Required for the sorting of endocytic ubiquitinated cargos into multivesicular bodies. May be involved in cell growth and differentiation. The protein is Vacuolar protein sorting-associated protein 37A (VPS37A) of Homo sapiens (Human).